The following is a 415-amino-acid chain: Putative transcription factor BOFH (415 aa).

The tract at residues 159–221 is disordered; that stretch reads SQEPVQHQDQ…NEGEDDDGMD (63 aa). Gly residues predominate over residues 174 to 183; it reads INGGGRGGYW. Basic residues predominate over residues 193–202; the sequence is QQQRRRKKRL. The span at 206-220 shows a compositional bias: acidic residues; it reads ETDDDGNEGEDDDGM. 3 consecutive DNA-binding regions follow at residues 234 to 238, 303 to 310, and 374 to 377; these read REHPF, NKPKMRHY, and YVPT.

This sequence belongs to the FLO/LFY family. Acts in the floral primordia.

It is found in the nucleus. Its function is as follows. Controls floral meristem identity. Is required very early in flower development and may act here as a transcription factor. The polypeptide is Putative transcription factor BOFH (Brassica oleracea var. botrytis (Cauliflower)).